The primary structure comprises 513 residues: GMP synthase [glutamine-hydrolyzing] (513 aa).

The Glutamine amidotransferase type-1 domain occupies 3–192 (TVVVLDYGSQ…VSKIAKMEKN (190 aa)). Catalysis depends on Cys80, which acts as the Nucleophile. Residues His166 and Glu168 contribute to the active site. The 196-residue stretch at 193-388 (WEMKDFVSEK…LELPQSMINR (196 aa)) folds into the GMPS ATP-PPase domain. 220–226 (SGGVDSS) lines the ATP pocket.

In terms of assembly, homodimer.

It carries out the reaction XMP + L-glutamine + ATP + H2O = GMP + L-glutamate + AMP + diphosphate + 2 H(+). The protein operates within purine metabolism; GMP biosynthesis; GMP from XMP (L-Gln route): step 1/1. Its function is as follows. Catalyzes the synthesis of GMP from XMP. The polypeptide is GMP synthase [glutamine-hydrolyzing] (Thermosipho melanesiensis (strain DSM 12029 / CIP 104789 / BI429)).